Reading from the N-terminus, the 465-residue chain is Cysteine--tRNA ligase (465 aa).

Cys-29 contacts Zn(2+). Residues 31 to 41 (PTVYNYIHIGN) carry the 'HIGH' region motif. Residues Cys-209, His-234, and Glu-238 each contribute to the Zn(2+) site. The short motif at 266–270 (KMSKS) is the 'KMSKS' region element. Lys-269 is an ATP binding site. Ser-270 carries the phosphoserine modification.

Belongs to the class-I aminoacyl-tRNA synthetase family. Monomer. Zn(2+) is required as a cofactor.

It localises to the cytoplasm. It catalyses the reaction tRNA(Cys) + L-cysteine + ATP = L-cysteinyl-tRNA(Cys) + AMP + diphosphate. The protein is Cysteine--tRNA ligase of Bacillus thuringiensis (strain Al Hakam).